A 440-amino-acid chain; its full sequence is Aspartokinase (440 aa).

Belongs to the aspartokinase family.

The catalysed reaction is L-aspartate + ATP = 4-phospho-L-aspartate + ADP. The protein operates within amino-acid biosynthesis; L-lysine biosynthesis via DAP pathway; (S)-tetrahydrodipicolinate from L-aspartate: step 1/4. Its pathway is amino-acid biosynthesis; L-methionine biosynthesis via de novo pathway; L-homoserine from L-aspartate: step 1/3. It functions in the pathway amino-acid biosynthesis; L-threonine biosynthesis; L-threonine from L-aspartate: step 1/5. The chain is Aspartokinase (lysC) from Chlamydia pneumoniae (Chlamydophila pneumoniae).